We begin with the raw amino-acid sequence, 263 residues long: Tryptophan synthase alpha chain (263 aa).

Active-site proton acceptor residues include Glu-49 and Asp-60.

It belongs to the TrpA family. Tetramer of two alpha and two beta chains.

It carries out the reaction (1S,2R)-1-C-(indol-3-yl)glycerol 3-phosphate + L-serine = D-glyceraldehyde 3-phosphate + L-tryptophan + H2O. Its pathway is amino-acid biosynthesis; L-tryptophan biosynthesis; L-tryptophan from chorismate: step 5/5. Its function is as follows. The alpha subunit is responsible for the aldol cleavage of indoleglycerol phosphate to indole and glyceraldehyde 3-phosphate. The sequence is that of Tryptophan synthase alpha chain from Jannaschia sp. (strain CCS1).